A 518-amino-acid chain; its full sequence is ETHYLENE INSENSITIVE 3-like 2 protein (518 aa).

The stretch at 37–73 forms a coiled coil; sequence DDLSSDEEMEIEELEKKIWRDKQRLKRLKEMAKNGLG. The disordered stretch occupies residues 450–518; sequence FNHPNDLYRP…GQELPTSWIQ (69 aa). Polar residues-rich tracts occupy residues 475–484 and 500–518; these read PSPSTLNQNL and GTEN…SWIQ.

Belongs to the EIN3 family. As to quaternary structure, acts as a homodimer to bind the primary ethylene response element.

Its subcellular location is the nucleus. Functionally, probable transcription factor acting as a positive regulator in the ethylene response pathway. Could bind the primary ethylene response element present in the ETHYLENE-RESPONSE-FACTOR1 promoter. In Arabidopsis thaliana (Mouse-ear cress), this protein is ETHYLENE INSENSITIVE 3-like 2 protein (EIL2).